Reading from the N-terminus, the 345-residue chain is Protein GAMETE CELL DEFECTIVE 1, mitochondrial (345 aa).

A mitochondrion-targeting transit peptide spans methionine 1–glycine 43. A disordered region spans residues leucine 36–serine 81.

Expressed in roots, stems, leaves and florets.

The protein resides in the mitochondrion. Its function is as follows. Essential for fertility (male and female gametophyte functions and development). Required for the integrity of female gametic mitochondria. Involved in embryo apical-basal patterning, and particularly dorsal-ventral patterning, during early embryogenesis, and endosperm free nucleus positioning and development as well as early endosperm development, probably by modulating the expression pattern of related genes (e.g. AL1, MYB3/AL2, CYP78A13/GE, PNH1, HAZ1, MPK6 and OSH1). Has function in triggering of endosperm programmed cell death (PCD) leading to syncytial endosperm cellularization and starchy endosperm cell maturation. Implicated in central vacuole dynamics necessary for microspore development leading to pollen production, and for pollen development and germination. The chain is Protein GAMETE CELL DEFECTIVE 1, mitochondrial from Oryza sativa subsp. japonica (Rice).